The primary structure comprises 103 residues: Urease subunit beta (103 aa).

Belongs to the urease beta subunit family. As to quaternary structure, heterotrimer of UreA (gamma), UreB (beta) and UreC (alpha) subunits. Three heterotrimers associate to form the active enzyme.

The protein localises to the cytoplasm. It catalyses the reaction urea + 2 H2O + H(+) = hydrogencarbonate + 2 NH4(+). It participates in nitrogen metabolism; urea degradation; CO(2) and NH(3) from urea (urease route): step 1/1. The sequence is that of Urease subunit beta from Streptomyces avermitilis (strain ATCC 31267 / DSM 46492 / JCM 5070 / NBRC 14893 / NCIMB 12804 / NRRL 8165 / MA-4680).